Reading from the N-terminus, the 787-residue chain is Transcription factor SOX-6 (787 aa).

Residues 1–46 form a disordered region; that stretch reads MSSKQATSPFACAADGEDAMTQDLTSREKEEGSDQHVASHLPLHPI. Residues 25-34 show a composition bias toward basic and acidic residues; it reads TSREKEEGSD. Residue T119 is modified to Phosphothreonine. Residues 184–262 adopt a coiled-coil conformation; that stretch reads LAEKERQLST…LLQQQIQVQG (79 aa). Residues 340-429 are disordered; that stretch reads PGAKMPSTPQ…KSSIPSPIGG (90 aa). Positions 352–361 are enriched in polar residues; sequence NTAGTVSPTG. S358 is subject to Phosphoserine. T360 bears the Phosphothreonine mark. Residues K363 and K376 each participate in a glycyl lysine isopeptide (Lys-Gly) (interchain with G-Cter in SUMO) cross-link. A phosphoserine mark is found at S398 and S401. A compositionally biased stretch (polar residues) spans 398-420; the sequence is SPTSPTQNLFPASKTSPVNLPNK. A DNA-binding region (HMG box) is located at residues 580–648; that stretch reads IKRPMNAFMV…IHLEKYPNYK (69 aa). The segment covering 712–740 has biased composition (polar residues); that stretch reads TPSPQMTSDCSSTSASPEPSLPVIQSTYG. Positions 712 to 787 are disordered; sequence TPSPQMTSDC…NEAPEAVSAN (76 aa). A compositionally biased stretch (acidic residues) spans 755-768; sequence NGEDEMEMYDDYED.

Homodimer. Interacts with DAZAP2. May interact with CENPK. In terms of processing, sumoylation inhibits the transcriptional activity.

Its subcellular location is the nucleus. The protein localises to the cytoplasm. Transcription factor that plays a key role in several developmental processes, including neurogenesis, chondrocytes differentiation and cartilage formation. Specifically binds the 5'-AACAAT-3' DNA motif present in enhancers and super-enhancers and promotes expression of genes important for chondrogenesis. Required for overt chondrogenesis when condensed prechondrocytes differentiate into early stage chondrocytes: SOX5 and SOX6 cooperatively bind with SOX9 on active enhancers and super-enhancers associated with cartilage-specific genes, and thereby potentiate SOX9's ability to transactivate. Not involved in precartilaginous condensation, the first step in chondrogenesis, during which skeletal progenitors differentiate into prechondrocytes. Together with SOX5, required to form and maintain a pool of highly proliferating chondroblasts between epiphyses and metaphyses, to form columnar chondroblasts, delay chondrocyte prehypertrophy but promote hypertrophy, and to delay terminal differentiation of chondrocytes on contact with ossification fronts. Binds to the proximal promoter region of the myelin protein MPZ gene, and is thereby involved in the differentiation of oligodendroglia in the developing spinal tube. Binds to the gene promoter of MBP and acts as a transcriptional repressor. The polypeptide is Transcription factor SOX-6 (Pongo abelii (Sumatran orangutan)).